The chain runs to 305 residues: Putative monooxygenase p33MONOX (305 aa).

The segment at 37-56 is disordered; it reads LEDPAPMTPPPSDMGSVPWK. A Phosphothreonine modification is found at T44. The Flavin-containing monooxygenase motif signature appears at 67 to 77; it reads LAKVEEGEASL. Disordered stretches follow at residues 158-236 and 259-305; these read QSGE…KYDS and QANR…PTGF. A compositionally biased stretch (low complexity) spans 169-183; the sequence is PASAQSTPSTTPHSS. T175 carries the post-translational modification Phosphothreonine. A phosphoserine mark is found at S182 and S183. Polar residues predominate over residues 193–210; that stretch reads TSGSSTALPGPNPSTMDS.

Belongs to the P33MONOX family. Interacts with NELFB, NOL12 and PRNP. Down-regulated in the occipital lobe of an early stage Alzheimer disease patients.

The protein resides in the cytoplasm. Potential NADPH-dependent oxidoreductase. May be involved in the regulation of neuronal survival, differentiation and axonal outgrowth. The protein is Putative monooxygenase p33MONOX (KIAA1191) of Homo sapiens (Human).